The primary structure comprises 498 residues: Glycerol kinase (498 aa).

Threonine 11 lines the ADP pocket. Residues threonine 11, serine 12, and serine 13 each contribute to the ATP site. Threonine 11 lines the sn-glycerol 3-phosphate pocket. Arginine 15 lines the ADP pocket. Residues arginine 81, glutamate 82, tyrosine 133, and aspartate 242 each contribute to the sn-glycerol 3-phosphate site. 5 residues coordinate glycerol: arginine 81, glutamate 82, tyrosine 133, aspartate 242, and glutamine 243. ADP is bound by residues threonine 264 and glycine 307. The ATP site is built by threonine 264, glycine 307, glutamine 311, and glycine 412. Residues glycine 412 and asparagine 416 each contribute to the ADP site.

The protein belongs to the FGGY kinase family.

It carries out the reaction glycerol + ATP = sn-glycerol 3-phosphate + ADP + H(+). Its pathway is polyol metabolism; glycerol degradation via glycerol kinase pathway; sn-glycerol 3-phosphate from glycerol: step 1/1. With respect to regulation, inhibited by fructose 1,6-bisphosphate (FBP). Functionally, key enzyme in the regulation of glycerol uptake and metabolism. Catalyzes the phosphorylation of glycerol to yield sn-glycerol 3-phosphate. The chain is Glycerol kinase from Acidovorax ebreus (strain TPSY) (Diaphorobacter sp. (strain TPSY)).